Reading from the N-terminus, the 502-residue chain is Glycerol kinase (502 aa).

Thr15 lines the ADP pocket. ATP is bound by residues Thr15, Thr16, and Ser17. Residue Thr15 participates in sn-glycerol 3-phosphate binding. Arg19 contributes to the ADP binding site. Sn-glycerol 3-phosphate is bound by residues Arg85, Glu86, and Tyr137. 3 residues coordinate glycerol: Arg85, Glu86, and Tyr137. At His233 the chain carries Phosphohistidine; by HPr. Sn-glycerol 3-phosphate is bound at residue Asp247. Glycerol contacts are provided by Asp247 and Gln248. ADP-binding residues include Thr269 and Gly312. The ATP site is built by Thr269, Gly312, Gln316, and Gly413. Gly413 and Asn417 together coordinate ADP.

It belongs to the FGGY kinase family. Homotetramer and homodimer (in equilibrium). Post-translationally, the phosphoenolpyruvate-dependent sugar phosphotransferase system (PTS), including enzyme I, and histidine-containing protein (HPr) are required for the phosphorylation, which leads to the activation of the enzyme.

The enzyme catalyses glycerol + ATP = sn-glycerol 3-phosphate + ADP + H(+). It participates in polyol metabolism; glycerol degradation via glycerol kinase pathway; sn-glycerol 3-phosphate from glycerol: step 1/1. Its activity is regulated as follows. Activated by phosphorylation and inhibited by fructose 1,6-bisphosphate (FBP). Its function is as follows. Key enzyme in the regulation of glycerol uptake and metabolism. Catalyzes the phosphorylation of glycerol to yield sn-glycerol 3-phosphate. In Streptococcus agalactiae serotype Ia (strain ATCC 27591 / A909 / CDC SS700), this protein is Glycerol kinase.